Reading from the N-terminus, the 181-residue chain is Alkyl hydroperoxide reductase AhpD (181 aa).

Cys-131 serves as the catalytic Proton donor. An intrachain disulfide couples Cys-131 to Cys-134. The active-site Cysteine sulfenic acid (-SOH) intermediate is Cys-134.

This sequence belongs to the AhpD family.

It carries out the reaction N(6)-[(R)-dihydrolipoyl]-L-lysyl-[lipoyl-carrier protein] + a hydroperoxide = N(6)-[(R)-lipoyl]-L-lysyl-[lipoyl-carrier protein] + an alcohol + H2O. Antioxidant protein with alkyl hydroperoxidase activity. Required for the reduction of the AhpC active site cysteine residues and for the regeneration of the AhpC enzyme activity. This Azorhizobium caulinodans (strain ATCC 43989 / DSM 5975 / JCM 20966 / LMG 6465 / NBRC 14845 / NCIMB 13405 / ORS 571) protein is Alkyl hydroperoxide reductase AhpD.